A 93-amino-acid chain; its full sequence is Small ribosomal subunit protein uS19 (93 aa).

Belongs to the universal ribosomal protein uS19 family.

In terms of biological role, protein S19 forms a complex with S13 that binds strongly to the 16S ribosomal RNA. This Dehalococcoides mccartyi (strain ATCC BAA-2100 / JCM 16839 / KCTC 5957 / BAV1) protein is Small ribosomal subunit protein uS19.